Reading from the N-terminus, the 170-residue chain is NADH-quinone oxidoreductase subunit B (170 aa).

4 residues coordinate [4Fe-4S] cluster: Cys-46, Cys-47, Cys-111, and Cys-141.

The protein belongs to the complex I 20 kDa subunit family. NDH-1 is composed of 14 different subunits. Subunits NuoB, C, D, E, F, and G constitute the peripheral sector of the complex. [4Fe-4S] cluster serves as cofactor.

The protein localises to the cell membrane. The catalysed reaction is a quinone + NADH + 5 H(+)(in) = a quinol + NAD(+) + 4 H(+)(out). In terms of biological role, NDH-1 shuttles electrons from NADH, via FMN and iron-sulfur (Fe-S) centers, to quinones in the respiratory chain. The immediate electron acceptor for the enzyme in this species is believed to be a menaquinone. Couples the redox reaction to proton translocation (for every two electrons transferred, four hydrogen ions are translocated across the cytoplasmic membrane), and thus conserves the redox energy in a proton gradient. The chain is NADH-quinone oxidoreductase subunit B from Geobacillus thermodenitrificans (strain NG80-2).